Consider the following 195-residue polypeptide: Cysteine/O-acetylserine efflux protein (195 aa).

The Periplasmic portion of the chain corresponds to 1-9; it reads MTPMLLSAF. The helical transmembrane segment at 10–32 threads the bilayer; sequence WTYTLITALTPGPNNILALSAAT. Residues 33–46 are Cytoplasmic-facing; the sequence is AHGFRQSIRVLAGM. The chain crosses the membrane as a helical span at residues 47 to 67; it reads SLGFLVVMLLCAGIAFSLAVI. Topologically, residues 68 to 69 are periplasmic; sequence DP. A helical membrane pass occupies residues 70–90; it reads AIIHLLSWVGAAYILWLAWKI. The Cytoplasmic segment spans residues 91-104; sequence ATSPAADEKVRPKP. Residues 105 to 125 form a helical membrane-spanning segment; the sequence is VGFWVSFGLQFVNVKIILYGI. The Periplasmic segment spans residues 126-141; that stretch reads TALSTFVLPQTQALNW. Residues 142–162 form a helical membrane-spanning segment; that stretch reads VIGVSILLALIGTFGNVCWAL. The Cytoplasmic segment spans residues 163-176; it reads AGHLFQRAFRHYGR. The chain crosses the membrane as a helical span at residues 177–194; it reads QLNIILALLLVYCAVRIF. Residue tyrosine 195 is a topological domain, periplasmic.

It belongs to the Rht family.

Its subcellular location is the cell inner membrane. The catalysed reaction is O-acetyl-L-serine(in) = O-acetyl-L-serine(out). The enzyme catalyses L-cysteine(in) = L-cysteine(out). Functionally, exporter of O-acetylserine (OAS) and cysteine. The chain is Cysteine/O-acetylserine efflux protein (eamB) from Salmonella paratyphi A (strain ATCC 9150 / SARB42).